The following is a 349-amino-acid chain: Isopentenyl-diphosphate delta-isomerase (349 aa).

A substrate-binding site is contributed by 6-7 (RK). FMN is bound by residues 62 to 64 (AMT), Ser93, and Asn122. Substrate is bound at residue Gln152. Glu153 serves as a coordination point for Mg(2+). FMN contacts are provided by residues Lys184, Thr214, 258–259 (GG), and 280–281 (AG).

This sequence belongs to the IPP isomerase type 2 family. Homooctamer. Dimer of tetramers. Requires FMN as cofactor. NADPH serves as cofactor. Mg(2+) is required as a cofactor.

Its subcellular location is the cytoplasm. The enzyme catalyses isopentenyl diphosphate = dimethylallyl diphosphate. Its function is as follows. Involved in the biosynthesis of isoprenoids. Catalyzes the 1,3-allylic rearrangement of the homoallylic substrate isopentenyl (IPP) to its allylic isomer, dimethylallyl diphosphate (DMAPP). The sequence is that of Isopentenyl-diphosphate delta-isomerase from Bacillus cereus (strain ATCC 14579 / DSM 31 / CCUG 7414 / JCM 2152 / NBRC 15305 / NCIMB 9373 / NCTC 2599 / NRRL B-3711).